Reading from the N-terminus, the 343-residue chain is Dehydrodolichyl diphosphate synthase complex subunit SRT1 (343 aa).

The protein belongs to the UPP synthase family. In terms of assembly, forms an active dehydrodolichyl diphosphate synthase complex with NUS1. Mg(2+) serves as cofactor.

It localises to the lipid droplet. The catalysed reaction is n isopentenyl diphosphate + (2E,6E)-farnesyl diphosphate = a di-trans,poly-cis-polyprenyl diphosphate + n diphosphate. It participates in protein modification; protein glycosylation. In terms of biological role, with NUS1, forms the dehydrodolichyl diphosphate synthase (DDS) complex, an essential component of the dolichol monophosphate (Dol-P) biosynthetic machinery. Adds multiple copies of isopentenyl pyrophosphate (IPP) to farnesyl pyrophosphate (FPP) to produce dehydrodolichyl diphosphate (Dedol-PP), a precursor of dolichol which is utilized as a sugar carrier in protein glycosylation in the endoplasmic reticulum (ER). The sequence is that of Dehydrodolichyl diphosphate synthase complex subunit SRT1 from Saccharomyces cerevisiae (strain ATCC 204508 / S288c) (Baker's yeast).